A 209-amino-acid chain; its full sequence is MTIGVVGRKCGMTRIFTEEGVSIPVTVIEIEPNRVTQFKNEESDGYRAVQVTVGERRASRVSKAQAGHFAKANVAAGRTVMEFRLEEGDYQAGDLINAEIFQAGQLVDVTGQSKGKGFAGTIKRWNFRGQDNTHGNSVSHRVPGSIGQCQTPGRVFKGKKMSGHMGAERVTVQSLEVVRVDAERNLLLVKGAVPGATGGDVIVRPAVKA.

Position 150 is an N5-methylglutamine (Q150).

Belongs to the universal ribosomal protein uL3 family. As to quaternary structure, part of the 50S ribosomal subunit. Forms a cluster with proteins L14 and L19. Post-translationally, methylated by PrmB.

In terms of biological role, one of the primary rRNA binding proteins, it binds directly near the 3'-end of the 23S rRNA, where it nucleates assembly of the 50S subunit. In Ectopseudomonas mendocina (strain ymp) (Pseudomonas mendocina), this protein is Large ribosomal subunit protein uL3.